Here is a 452-residue protein sequence, read N- to C-terminus: MMDLEGYVRRCLRKKIPENKIIEDGFKRILEIKEDVDEEFAKKFIKAILEEVKTTEKFREIDDENLKTLLKYPKSGVTMGRMGVGSRGEGDFFVHREIARIVKSTKVKAYVSAEEQDDAGIVRADAKYIVAAIDGTHSRLSDFPFLGGFHVTRAALRDIYVMGAEAVALISDVHLADDGDVGKIFDFTAGICAVSEAVNVPLIGGSTLRVGGDMVIGDRLVSAVGAIGVIKEGEPTARRNAEVGDVILMTEGSGGGTITTTALYYGWFDVIYETLNVDFIKACQNLIRSGLIKKIHAMTDVTNGGLRGDAYEISKTAKVSLIFDKEKVYKTINPKVLEMLEVLNIDPLGVSTDSLMIICPEEYADDIKKVTGAIEVGYVEEGEESYLVDGNKKIPLKPMFRESAYTPVKKVVGERKPGDFEEMKEKVRRACDEAIKKKDFVVELLKERKKKF.

This sequence belongs to the HypE family.

This is an uncharacterized protein from Methanocaldococcus jannaschii (strain ATCC 43067 / DSM 2661 / JAL-1 / JCM 10045 / NBRC 100440) (Methanococcus jannaschii).